The primary structure comprises 98 residues: NADH-ubiquinone oxidoreductase chain 4L (98 aa).

The next 3 membrane-spanning stretches (helical) occupy residues 1-21 (MTLVHMNLLLAFAMSLTGLLM), 26-46 (LMSALLCLEGMVLSLFILATI), and 59-79 (MPIILLVFAACEAAIGLALLV).

The protein belongs to the complex I subunit 4L family. As to quaternary structure, core subunit of respiratory chain NADH dehydrogenase (Complex I) which is composed of 45 different subunits.

The protein resides in the mitochondrion inner membrane. It carries out the reaction a ubiquinone + NADH + 5 H(+)(in) = a ubiquinol + NAD(+) + 4 H(+)(out). Core subunit of the mitochondrial membrane respiratory chain NADH dehydrogenase (Complex I) which catalyzes electron transfer from NADH through the respiratory chain, using ubiquinone as an electron acceptor. Part of the enzyme membrane arm which is embedded in the lipid bilayer and involved in proton translocation. The protein is NADH-ubiquinone oxidoreductase chain 4L (MT-ND4L) of Pontoporia blainvillei (Franciscana).